We begin with the raw amino-acid sequence, 252 residues long: 5'-nucleotidase SurE (252 aa).

Positions 8, 9, 39, and 91 each coordinate a divalent metal cation.

It belongs to the SurE nucleotidase family. A divalent metal cation is required as a cofactor.

The protein localises to the cytoplasm. It carries out the reaction a ribonucleoside 5'-phosphate + H2O = a ribonucleoside + phosphate. Nucleotidase that shows phosphatase activity on nucleoside 5'-monophosphates. The protein is 5'-nucleotidase SurE of Bordetella bronchiseptica (strain ATCC BAA-588 / NCTC 13252 / RB50) (Alcaligenes bronchisepticus).